A 227-amino-acid chain; its full sequence is Ubiquitin domain-containing protein 1 (227 aa).

The segment at 1–36 (MGNCVGRQRRERPTAPGHPRKRAGRNEPLKKERLKW) is disordered. Positions 24–36 (GRNEPLKKERLKW) are enriched in basic and acidic residues. The region spanning 149 to 224 (FPLKVRLSTG…IQVIINQPPP (76 aa)) is the Ubiquitin-like domain.

In terms of assembly, interacts with UBTD1.

Functionally, may be involved in the regulation of cellular senescence through a positive feedback loop with TP53. Is a TP53 downstream target gene that increases the stability of TP53 protein by promoting the ubiquitination and degradation of MDM2. The polypeptide is Ubiquitin domain-containing protein 1 (UBTD1) (Bos taurus (Bovine)).